The sequence spans 200 residues: HVA22-like protein k (200 aa).

The interval Leu176 to Asp200 is disordered.

Belongs to the DP1 family.

The polypeptide is HVA22-like protein k (HVA22K) (Arabidopsis thaliana (Mouse-ear cress)).